The primary structure comprises 130 residues: Small ribosomal subunit protein uS8 (130 aa).

It belongs to the universal ribosomal protein uS8 family.

In Strongylocentrotus purpuratus (Purple sea urchin), this protein is Small ribosomal subunit protein uS8 (RPS15A).